The following is a 705-amino-acid chain: MSSNTGDQFANLGKALSTTASVLFSSQPMEDTILSYSSPYKKLLHETITNAGGGSSLVKVRHDVKLSKGKNTGFQDIYSNSKEFFKNSYSDPKTTFKVLSYLSDDLLEDAPRDTIPQNKNMITENGEKRSAKSKKQEPTLFQGFEASLPVINETIELQQKLIMNSDMKPLTDSESIPVYAEEEEQEEEFSLPDHLKADKLLHSYSASFLKDASRSITDNLDLLEIQKNLAASEIRELDIKLEKLKMMRELVFKRVAKIEQHELFLEKHLNNVKDRIDMIIEYNMDKEYSSEDEENINGLSELSPKTGETNETYETAATTPLENKEEEHSPLLSKSIYQQLQDHEKKSDISERKKHSTSKKIKDVGVSHRNRRRKTYPTLQQFYDSGSKITSLPKAHDEDITCLDFDMPFGTMCSAGSLDHSVKVWDLSKKKQIATLHGHLASISCMQIDQYSTLITGGRDAVLKLWDIDKAMADEASNSSEDNDACLYTFDSHVDEITAISFDGDNLVSGSQDRTVRQWDLNSGKCTQTIDISFATGPMRSQRNIPLRNSVLLTKEPPAIGALQCFDAALATGTKDGIVRLWDLRSGKVVRMLEGHTDAITSLQFDSVNLVTGAMDRSIRIWDLRTGILSDVFAYEQPITSLHFDLDKIVISNNEPTVKIYNRKDGNHWFCGEDDPEQGNVDFVRYKHGYLVEGRSNGDINTWAI.

Residues 110 to 136 (APRDTIPQNKNMITENGEKRSAKSKKQ) form a disordered region. Residues 125-136 (NGEKRSAKSKKQ) are compositionally biased toward basic and acidic residues. Positions 216 to 250 (ITDNLDLLEIQKNLAASEIRELDIKLEKLKMMREL) form a coiled coil. Disordered stretches follow at residues 290 to 310 (SEDE…GETN) and 342 to 369 (DHEK…VSHR). Residues 342–351 (DHEKKSDISE) are compositionally biased toward basic and acidic residues. WD repeat units lie at residues 395–435 (AHDE…QIAT), 438–476 (GHLA…ADEA), 492–529 (SHVD…CTQT), 547–594 (LRNS…RMLE), 595–632 (GHTD…LSDV), 634–671 (AYEQ…HWFC), and 676–705 (PEQG…TWAI).

It belongs to the WD repeat MDV1/CAF4 family.

It localises to the mitochondrion outer membrane. Involved in mitochondrial fission. Acts as an adapter protein required to form mitochondrial fission complexes. Formation of these complexes is required to promote constriction and fission of the mitochondrial compartment at a late step in mitochondrial division. The chain is Mitochondrial division protein 1 (MDV1) from Kluyveromyces lactis (strain ATCC 8585 / CBS 2359 / DSM 70799 / NBRC 1267 / NRRL Y-1140 / WM37) (Yeast).